The primary structure comprises 193 residues: dCTP deaminase (193 aa).

DCTP contacts are provided by residues 110–115 (RSSLAR), Asp-128, 136–138 (VLE), Tyr-171, Lys-178, and Gln-182. The active-site Proton donor/acceptor is the Glu-138.

It belongs to the dCTP deaminase family. In terms of assembly, homotrimer.

The catalysed reaction is dCTP + H2O + H(+) = dUTP + NH4(+). The protein operates within pyrimidine metabolism; dUMP biosynthesis; dUMP from dCTP (dUTP route): step 1/2. Functionally, catalyzes the deamination of dCTP to dUTP. The polypeptide is dCTP deaminase (Tolumonas auensis (strain DSM 9187 / NBRC 110442 / TA 4)).